Reading from the N-terminus, the 280-residue chain is NAD(+) hydrolase TirS (280 aa).

The stretch at 22–94 forms a coiled coil; it reads MNKLPDEIDR…KINLQKEQSR (73 aa). The TIR domain occupies 141 to 275; sequence IEYDVFLSHS…EIVEKIYQVI (135 aa). NAD(+)-binding positions include 150-151 and E180; that span reads SS. E216 is a catalytic residue.

The protein localises to the secreted. The enzyme catalyses NAD(+) + H2O = ADP-D-ribose + nicotinamide + H(+). It catalyses the reaction NADP(+) + H2O = ADP-D-ribose 2'-phosphate + nicotinamide + H(+). Virulence factor that suppresses host Toll-like receptor 2 (TLR2)-mediated NF-kappa-B signaling upon infection. NAD(+) hydrolase (NADase) that catalyzes cleavage of NAD(+) into ADP-D-ribose (ADPR) and nicotinamide. Also able to hydrolyze NADP(+), but not other NAD(+)-related molecules. Able to reduce NAD(+) levels in host cells. This chain is NAD(+) hydrolase TirS, found in Staphylococcus aureus (strain MSSA476).